The primary structure comprises 232 residues: Small ribosomal subunit protein uS2 (232 aa).

The protein belongs to the universal ribosomal protein uS2 family.

This is Small ribosomal subunit protein uS2 from Carboxydothermus hydrogenoformans (strain ATCC BAA-161 / DSM 6008 / Z-2901).